We begin with the raw amino-acid sequence, 675 residues long: DNA ligase (675 aa).

NAD(+) is bound by residues 35-39 (DAVYD), 84-85 (SL), and Glu-118. The N6-AMP-lysine intermediate role is filled by Lys-120. Residues Arg-141, Glu-178, Lys-295, and Lys-319 each coordinate NAD(+). Residues Cys-413, Cys-416, Cys-431, and Cys-436 each contribute to the Zn(2+) site. A BRCT domain is found at 598 to 675 (GAIGALTGQT…DEAELKALLS (78 aa)).

It belongs to the NAD-dependent DNA ligase family. LigA subfamily. Mg(2+) is required as a cofactor. Mn(2+) serves as cofactor.

The enzyme catalyses NAD(+) + (deoxyribonucleotide)n-3'-hydroxyl + 5'-phospho-(deoxyribonucleotide)m = (deoxyribonucleotide)n+m + AMP + beta-nicotinamide D-nucleotide.. DNA ligase that catalyzes the formation of phosphodiester linkages between 5'-phosphoryl and 3'-hydroxyl groups in double-stranded DNA using NAD as a coenzyme and as the energy source for the reaction. It is essential for DNA replication and repair of damaged DNA. The polypeptide is DNA ligase (Synechococcus sp. (strain RCC307)).